A 406-amino-acid polypeptide reads, in one-letter code: O-glycosyltransferase PaGT (406 aa).

Residues 1–26 form a disordered region; that stretch reads MSPPSQIKPPQGTTPVPPSELDPRSD.

The protein belongs to the afumC glycosyltransferase family.

It functions in the pathway mycotoxin biosynthesis. Functionally, O-glycosyltransferase; part of the 2 gene clusters that mediate the biosynthesis of fusicoccins, diterpene glucosides that display phytohormone-like activity and function as potent activators of plasma membrane H(+)-ATPases in plants by modifying 14-3-3 proteins and cause the plant disease constriction canker. The first step in the pathway is performed by the fusicoccadiene synthase PaFS that possesses both prenyl transferase and terpene cyclase activity, converting isopentenyl diphosphate and dimethylallyl diphosphate into geranylgeranyl diphosphate (GGDP) and successively converting GGDP into fusicocca-2,10(14)-diene, a precursor for fusicoccin H. The second step is the oxidation at the C-8 position by the cytochrome P450 monooxygenase PaP450-2 to yield fusicocca-2,10(14)-diene-8-beta-ol. The cytochrome P450 monooxygenase PaP450-1 then catalyzes the hydroxylation at the C-16 position to produce fusicocca-2,10(14)-diene-8-beta,16-diol. The dioxygenase fc-dox then catalyzes the 16-oxydation of fusicocca-2,10(14)-diene-8-beta,16-diol to yield an aldehyde (8-beta-hydroxyfusicocca-1,10(14)-dien-16-al). The short-chain dehydrogenase/reductase fc-sdr catalyzes the reduction of the aldehyde to yield fusicocca-1,10(14)-diene-8-beta,16-diol. The next step is the hydroxylation at C-9 performed by the cytochrome P450 monooxygenase PaP450-3 that leads to fusicoccin H aglycon which is glycosylated to fusicoccin H by the O-glycosyltransferase PaGT. Hydroxylation at C-12 by the cytochrome P450 monooxygenase PaP450-4 leads then to the production of fusicoccin Q and is followed by methylation by the O-methyltransferase PaMT to yield fusicoccin P. Fusicoccin P is further converted to fusicoccin J via prenylation by the O-glucose prenyltransferase PaPT. Cytochrome P450 monooxygenase PaP450-5 then performs hydroxylation at C-19 to yield dideacetyl-fusicoccin A which is acetylated to 3'-O-deacetyl-fusicoccin A by the O-acetyltransferase PaAT-2. Finally, a another acetylation by the O-acetyltransferase PaAT-1 yields fusicoccin A. The sequence is that of O-glycosyltransferase PaGT from Phomopsis amygdali (Fusicoccum amygdali).